We begin with the raw amino-acid sequence, 699 residues long: MARTTPIERYRNIGIMAHIDAGKTTTTERILFYTGVSHKIGEVHEGTAVMDWMAQEQERGITITSAATTCFWKGMDGQRAEHRINIIDTPGHVDFTIEVERSLRVLDGAMAVFCAVGGVQPQSETVWRQANKYKVPRIAFVNKMDRQGANFKRVVDQIATKLRGNPVPVQLPIGEEDHFSGVIDLMKMKSINWDDALQGTRFTEEDIPPALQADAEAARHFMVEAIADADEDVMMKYLEGEEISIAELQAALRKATISGAVVPVLCGSAFKNKGVQAALDAVLDYLPSPVDIKPVEGTNPDNGEEIVRFADDSEPFSALAFKIATDPFVGQLTFFRVYSGVLTAGSTVLNPGRNQKERIGRVLQMHANERHEIKEVLAGDIAAAVGLKTAYTGDTLCDLNKPIALEQMEFPEPVIHVAVEPKTKADQEKMGIALGKLAQEDPSFRVRTDQESGQTIISGMGELHLEIIVDRMKREFGVEATVGAPQVAYRETIRKTVESEGKFVRQSGGRGQYGHVWLRLEPLEPGSGFVFENGVVGGTVPKEFINPTEKGVEEALENGIIAGFPVVDVKVTIFDGSYHDVDSSEAAFKIAGSMGFKAGAAKANPVLLEPIFAVEVVTPEEYMGDIIGDINSRRGMMQGMEDEAGAKLIRCEVPLAEMFGYATTVRSLSQGRATYTMQFEKYMEVPGHVAEAIVKKSQR.

Positions 8–290 constitute a tr-type G domain; sequence ERYRNIGIMA…AVLDYLPSPV (283 aa). Residues 17-24, 88-92, and 142-145 contribute to the GTP site; these read AHIDAGKT, DTPGH, and NKMD.

The protein belongs to the TRAFAC class translation factor GTPase superfamily. Classic translation factor GTPase family. EF-G/EF-2 subfamily.

It is found in the cytoplasm. Catalyzes the GTP-dependent ribosomal translocation step during translation elongation. During this step, the ribosome changes from the pre-translocational (PRE) to the post-translocational (POST) state as the newly formed A-site-bound peptidyl-tRNA and P-site-bound deacylated tRNA move to the P and E sites, respectively. Catalyzes the coordinated movement of the two tRNA molecules, the mRNA and conformational changes in the ribosome. The sequence is that of Elongation factor G from Acidithiobacillus ferrooxidans (strain ATCC 23270 / DSM 14882 / CIP 104768 / NCIMB 8455) (Ferrobacillus ferrooxidans (strain ATCC 23270)).